The sequence spans 783 residues: Probable galactinol--sucrose galactosyltransferase 5 (783 aa).

A phosphoserine mark is found at S9 and S11.

Belongs to the glycosyl hydrolases 36 family.

It catalyses the reaction alpha-D-galactosyl-(1-&gt;3)-1D-myo-inositol + sucrose = raffinose + myo-inositol. Functionally, transglycosidase operating by a ping-pong reaction mechanism. Involved in the synthesis of raffinose, a major soluble carbohydrate in seeds, roots and tubers. In Arabidopsis thaliana (Mouse-ear cress), this protein is Probable galactinol--sucrose galactosyltransferase 5 (RFS5).